A 259-amino-acid polypeptide reads, in one-letter code: Type III pantothenate kinase (259 aa).

6–13 is an ATP binding site; sequence DVGNTNIV. Substrate contacts are provided by residues Y100 and 107–110; that span reads GADR. The Proton acceptor role is filled by D109. D129 contributes to the K(+) binding site. T132 lines the ATP pocket. Position 184 (T184) interacts with substrate.

Belongs to the type III pantothenate kinase family. In terms of assembly, homodimer. Requires NH4(+) as cofactor. The cofactor is K(+).

The protein resides in the cytoplasm. It catalyses the reaction (R)-pantothenate + ATP = (R)-4'-phosphopantothenate + ADP + H(+). The protein operates within cofactor biosynthesis; coenzyme A biosynthesis; CoA from (R)-pantothenate: step 1/5. Its function is as follows. Catalyzes the phosphorylation of pantothenate (Pan), the first step in CoA biosynthesis. This is Type III pantothenate kinase from Clostridium kluyveri (strain NBRC 12016).